The chain runs to 226 residues: Octanoyltransferase (226 aa).

In terms of domain architecture, BPL/LPL catalytic spans 34 to 212 (LAAPDVLLTL…AFSRVFGLEF (179 aa)). Substrate contacts are provided by residues 76 to 83 (RGGDVTYH), 143 to 145 (AIG), and 156 to 158 (GIA). The active-site Acyl-thioester intermediate is the Cys-174.

The protein belongs to the LipB family.

The protein localises to the cytoplasm. The catalysed reaction is octanoyl-[ACP] + L-lysyl-[protein] = N(6)-octanoyl-L-lysyl-[protein] + holo-[ACP] + H(+). It participates in protein modification; protein lipoylation via endogenous pathway; protein N(6)-(lipoyl)lysine from octanoyl-[acyl-carrier-protein]: step 1/2. Catalyzes the transfer of endogenously produced octanoic acid from octanoyl-acyl-carrier-protein onto the lipoyl domains of lipoate-dependent enzymes. Lipoyl-ACP can also act as a substrate although octanoyl-ACP is likely to be the physiological substrate. In Thermosynechococcus vestitus (strain NIES-2133 / IAM M-273 / BP-1), this protein is Octanoyltransferase.